The chain runs to 440 residues: WAS/WASL-interacting protein family member 2 (440 aa).

A compositionally biased stretch (pro residues) spans 1–18 (MPIPPPPPPPPGPPPPPT). The interval 1–38 (MPIPPPPPPPPGPPPPPTFNQANTEQPKLSRDEQRNRG) is disordered. The WH2 domain maps to 36 to 53 (NRGALLQDICKGTKLKKV). An Asymmetric dimethylarginine modification is found at Arg-37. A binds actin region spans residues 49-52 (KLKK). Disordered regions lie at residues 56 to 386 (VNDR…RDSI) and 419 to 440 (RVYPSKTNRAARGAPPLPPILR). Residues 116 to 132 (PSSRAAAPRPPGSAASG) are compositionally biased toward low complexity. 4 stretches are compositionally biased toward pro residues: residues 176-193 (APPPPPPGRRANAPPTPL), 225-236 (PAPPPVKPPPSP), 249-262 (APPPPPYRQPPGVP), and 356-378 (RGKPPPPPSRTPAGPPPPPPPPL).

It belongs to the verprolin family. Interacts with WASL and WASP, and this interaction results in cytoplasmic relocation of these two proteins along actin filaments. Interacts with NCK2 resulting in the localization to sites of focal adhesions.

It is found in the cytoplasm. The protein resides in the cytoskeleton. Plays an active role in the formation of cell surface protrusions downstream of activated PDGFB receptors. Plays an important role in actin-microspike formation through cooperation with WASL. May cooperate with WASP and WASL to induce mobilization and reorganization of the actin filament system. The protein is WAS/WASL-interacting protein family member 2 (Wipf2) of Mus musculus (Mouse).